The primary structure comprises 659 residues: Threonine--tRNA ligase (659 aa).

Positions 1–61 (MSAVPELRIT…ADGDVVEEIR (61 aa)) constitute a TGS domain. The catalytic stretch occupies residues 260–555 (DHRKLGVELD…LLEHYAGAFP (296 aa)). Positions 353, 404, and 532 each coordinate Zn(2+).

Belongs to the class-II aminoacyl-tRNA synthetase family. In terms of assembly, homodimer. Requires Zn(2+) as cofactor.

The protein localises to the cytoplasm. The enzyme catalyses tRNA(Thr) + L-threonine + ATP = L-threonyl-tRNA(Thr) + AMP + diphosphate + H(+). Catalyzes the attachment of threonine to tRNA(Thr) in a two-step reaction: L-threonine is first activated by ATP to form Thr-AMP and then transferred to the acceptor end of tRNA(Thr). Also edits incorrectly charged L-seryl-tRNA(Thr). This is Threonine--tRNA ligase from Thermobifida fusca (strain YX).